The primary structure comprises 674 residues: UvrABC system protein B (674 aa).

In terms of domain architecture, Helicase ATP-binding spans 26 to 183 (EGLEDGLAHQ…RRLAELQYTR (158 aa)). 39-46 (GVTGSGKT) contacts ATP. The Beta-hairpin signature appears at 92–115 (YYDYYQPEAYVPSSDTFIEKDASV). One can recognise a Helicase C-terminal domain in the interval 431-597 (QVDDLLSEIR…GLNKKISDIL (167 aa)). The 36-residue stretch at 634-669 (QKRIHQLEAQMQQHAQNLEFEEAAQVRDQLHQVREL) folds into the UVR domain.

Belongs to the UvrB family. Forms a heterotetramer with UvrA during the search for lesions. Interacts with UvrC in an incision complex.

It localises to the cytoplasm. The UvrABC repair system catalyzes the recognition and processing of DNA lesions. A damage recognition complex composed of 2 UvrA and 2 UvrB subunits scans DNA for abnormalities. Upon binding of the UvrA(2)B(2) complex to a putative damaged site, the DNA wraps around one UvrB monomer. DNA wrap is dependent on ATP binding by UvrB and probably causes local melting of the DNA helix, facilitating insertion of UvrB beta-hairpin between the DNA strands. Then UvrB probes one DNA strand for the presence of a lesion. If a lesion is found the UvrA subunits dissociate and the UvrB-DNA preincision complex is formed. This complex is subsequently bound by UvrC and the second UvrB is released. If no lesion is found, the DNA wraps around the other UvrB subunit that will check the other stand for damage. The sequence is that of UvrABC system protein B from Erwinia tasmaniensis (strain DSM 17950 / CFBP 7177 / CIP 109463 / NCPPB 4357 / Et1/99).